We begin with the raw amino-acid sequence, 75 residues long: Large ribosomal subunit protein bL31 (75 aa).

Zn(2+) is bound by residues cysteine 16, cysteine 18, cysteine 38, and cysteine 41.

This sequence belongs to the bacterial ribosomal protein bL31 family. Type A subfamily. Part of the 50S ribosomal subunit. Zn(2+) serves as cofactor.

Functionally, binds the 23S rRNA. The polypeptide is Large ribosomal subunit protein bL31 (Nocardioides sp. (strain ATCC BAA-499 / JS614)).